The sequence spans 468 residues: O-methyltransferase lcsG (468 aa).

Residues 1 to 12 (MGDNVQSDTTAA) are compositionally biased toward polar residues. Positions 1–29 (MGDNVQSDTTAAQAGITDAPTAPTSAPVS) are disordered. S-adenosyl-L-methionine is bound by residues 298–299 (GG), aspartate 321, 348–349 (DF), and lysine 363.

Belongs to the class I-like SAM-binding methyltransferase superfamily. Cation-independent O-methyltransferase family.

Its pathway is secondary metabolite biosynthesis. Its function is as follows. O-methyltransferase; part of the gene cluster that mediates the biosynthesis of the lipopeptide antibiotics leucinostatins that show extensive biological activities, including antimalarial, antiviral, antibacterial, antifungal, and antitumor activities, as well as phytotoxic. Leucinostatin A contains nine amino acid residues, including the unusual amino acid 4-methyl-L-proline (MePro), 2-amino-6-hydroxy-4-methyl-8-oxodecanoic acid (AHyMeOA), 3-hydroxyleucine (HyLeu), alpha-aminoisobutyric acid (AIB), beta-Ala, a 4-methylhex-2-enoic acid at the N-terminus as well as a N1,N1-dimethylpropane-1,2-diamine (DPD) at the C-terminus. The biosynthesis of leucinostatins is probably initiated with the assembly of 4-methylhex-2-enoic acid by a reducing PKS. Two reducing polyketide synthases, lcsB and lcsC, have been identified in the cluster and it is not clear which is the one that assembles 4-methylhex-2-enoic acid since both contain KS, AT, DH, cMT, ER, KR and ACP domains. The polyketide residue might be transferred to the NRPS lcsA, mediated by two additional enzymes, the acyl-CoA ligase lcsD and the thioesterase lcsE. The linear polyketide carboxylic acid, which is released from PKS, is converted to a CoA thioester by lcsD, and then lcsE hydrolyzes the thiol bond and shuttles the polyketide intermediate to lcsA. The C domain of the first module catalyzed the condensation of 4-methylhex-2-enoic acid and MePro carried by domain A1, followed by successive condensations of nine amino acids to trigger the elongation of the linear peptide. A5 and A6 domains of lcsA are proposed to incorporate leucine, A2 AHyMeOA, and A3 incorporates HyLeu. A4, A7 and A8 incorporate AIB. The AHyMeOA in leucinostatin A activated by the A2 might be produced by the second PKS (lcsB or lcsC) present within the cluster. The MePro is probably produced via leucine cyclization and may originate from a separate pathway, independent of the cluster. Another nonproteinogenic amino acid, beta-Ala, could be produced by an aspartic acid decarboxylase also localized outside of the cluster. Two candidates are VFPBJ_01400 and VFPBJ_10476. The final peptide scaffold may be released by the NAD(P)H-dependent thioester reductase (TE) at the C-terminal region of lcsA. Transamination of the lcsA product by the transaminase lcsP may produce DPD at the C-terminus. Further hydroxylation steps performed alternatively by the cytochrome P450 monooxygenases lcsI, lcsK and lcsN then yield the non-methylated leucinostatins precursor. It is also possible that leucines can be hydroxylated prior to their incorporation into the peptide. Varying extents of methylation then lead to the formation of leucinostatins A and B. This Purpureocillium lilacinum (Paecilomyces lilacinus) protein is O-methyltransferase lcsG.